The following is a 477-amino-acid chain: 3-isopropylmalate dehydratase large subunit (477 aa).

[4Fe-4S] cluster-binding residues include cysteine 352, cysteine 413, and cysteine 416.

Belongs to the aconitase/IPM isomerase family. LeuC type 1 subfamily. In terms of assembly, heterodimer of LeuC and LeuD. The cofactor is [4Fe-4S] cluster.

It catalyses the reaction (2R,3S)-3-isopropylmalate = (2S)-2-isopropylmalate. The protein operates within amino-acid biosynthesis; L-leucine biosynthesis; L-leucine from 3-methyl-2-oxobutanoate: step 2/4. Functionally, catalyzes the isomerization between 2-isopropylmalate and 3-isopropylmalate, via the formation of 2-isopropylmaleate. The protein is 3-isopropylmalate dehydratase large subunit of Pseudomonas putida (strain W619).